The sequence spans 405 residues: Aspartic protease (405 aa).

The N-terminal stretch at 1–21 (MISDTVIAILAVALVGSTVQA) is a signal peptide. Positions 22 to 81 (APVDATATSTSGIIAVPISKSAAQLAREADPVVSLDWLKKTKAQAQYKHKQANARLHSKR) are cleaved as a propeptide — removed in mature form. A Peptidase A1 domain is found at 97–402 (WTGPITIGGQ…DVGNARVGFA (306 aa)). Aspartate 113 is a catalytic residue. A disulfide bridge connects residues cysteine 126 and cysteine 131. Aspartate 290 is a catalytic residue. A disulfide bridge connects residues cysteine 332 and cysteine 366.

The protein belongs to the peptidase A1 family.

It localises to the secreted. Inhibited by pepstatin A. Its function is as follows. Possesses acidic protease activity. Hydrolyzes casein and azoalbumin in vitro. This Phaffia rhodozyma (Yeast) protein is Aspartic protease.